A 207-amino-acid polypeptide reads, in one-letter code: Cytochrome c biogenesis ATP-binding export protein CcmA (207 aa).

The ABC transporter domain maps to 6 to 207 (LCAEGLECIR…RGDCRSLNLS (202 aa)). 38 to 45 (GANGAGKT) is a binding site for ATP.

It belongs to the ABC transporter superfamily. CcmA exporter (TC 3.A.1.107) family. As to quaternary structure, the complex is composed of two ATP-binding proteins (CcmA) and two transmembrane proteins (CcmB).

It localises to the cell inner membrane. It carries out the reaction heme b(in) + ATP + H2O = heme b(out) + ADP + phosphate + H(+). Functionally, part of the ABC transporter complex CcmAB involved in the biogenesis of c-type cytochromes; once thought to export heme, this seems not to be the case, but its exact role is uncertain. Responsible for energy coupling to the transport system. The chain is Cytochrome c biogenesis ATP-binding export protein CcmA from Methylococcus capsulatus (strain ATCC 33009 / NCIMB 11132 / Bath).